The chain runs to 236 residues: Thiol:disulfide interchange protein DsbC (236 aa).

Residues 1-20 form the signal peptide; the sequence is MKKGFMLFTLLAAFSGFAQA. The Thioredoxin domain occupies 36–231; it reads SSDIQPAPVA…MKEFLDEHQK (196 aa). 2 disulfides stabilise this stretch: Cys118–Cys121 and Cys161–Cys183.

The protein belongs to the thioredoxin family. DsbC subfamily. As to quaternary structure, homodimer.

The protein resides in the periplasm. Functionally, required for disulfide bond formation in some periplasmic proteins. Acts by transferring its disulfide bond to other proteins and is reduced in the process. DsbC is reoxidized by a yet uncharacterized protein. Also acts as a disulfide isomerase. The protein is Thiol:disulfide interchange protein DsbC (dsbC) of Escherichia coli O157:H7.